We begin with the raw amino-acid sequence, 509 residues long: Coiled-coil domain-containing protein 181 (509 aa).

A compositionally biased stretch (basic and acidic residues) spans 60-82 (EHTKQHSDPDKSLQDDVSPRRND). Disordered regions lie at residues 60–121 (EHTK…EEDE) and 285–367 (GEPL…EEKE). A compositionally biased stretch (polar residues) spans 320–334 (RTQSARISPVTSTYC). A coiled-coil region spans residues 335-375 (LSPRQKELQKQLEQKREKLKREEEQRKIEEEKEKKRENDIV). The span at 338-367 (RQKELQKQLEQKREKLKREEEQRKIEEEKE) shows a compositional bias: basic and acidic residues.

It belongs to the CCDC181 family. In terms of assembly, homodimer. Interacts with HOOK1. Interacts with HOOK2. Interacts with HOOK3.

The protein localises to the cytoplasm. The protein resides in the cytoskeleton. It localises to the cell projection. Its subcellular location is the cilium. It is found in the flagellum. In terms of biological role, microtubule-binding protein that localizes to the microtubular manchette of elongating spermatids. The sequence is that of Coiled-coil domain-containing protein 181 from Macaca fascicularis (Crab-eating macaque).